Reading from the N-terminus, the 159-residue chain is Cyclic pyranopterin monophosphate synthase (159 aa).

Residues 75–77 (LCH) and 113–114 (ME) contribute to the substrate site. Aspartate 128 is a catalytic residue.

The protein belongs to the MoaC family. In terms of assembly, homohexamer; trimer of dimers.

It catalyses the reaction (8S)-3',8-cyclo-7,8-dihydroguanosine 5'-triphosphate = cyclic pyranopterin phosphate + diphosphate. Its pathway is cofactor biosynthesis; molybdopterin biosynthesis. In terms of biological role, catalyzes the conversion of (8S)-3',8-cyclo-7,8-dihydroguanosine 5'-triphosphate to cyclic pyranopterin monophosphate (cPMP). This Yersinia pseudotuberculosis serotype O:1b (strain IP 31758) protein is Cyclic pyranopterin monophosphate synthase.